Here is an 82-residue protein sequence, read N- to C-terminus: MTALFENPTHNLEAQGLRCPEPVMMVRKTVRKMEEGETLLILADDPSTTRDIPSFCRFMDHTLVAADTETLPYRFLIRKGSN.

C19 serves as the catalytic Cysteine persulfide intermediate.

Belongs to the sulfur carrier protein TusA family.

The protein localises to the cytoplasm. Functionally, sulfur carrier protein which probably makes part of a sulfur-relay system. This chain is Sulfur carrier protein TusA, found in Photobacterium profundum (strain SS9).